The chain runs to 356 residues: MFSSEGKFRKTYRHQFNQLRTGDETEIPMSTLASRIETRKIPLTNGQIHAIKEAPDELVDIDGFQKIVTSKAAQRSTIKRIMYDMADPIMSDSQKIEVHSYIDSYSWCPPPIFMLLITIIQVGIFFFYWESDGGRSIWTDCAGCFVHHNHTAPGIFIFAPKLRGEAWRFTSYMFLHAGLNHLLGNVIIQLLVGIPLEVAHKIWRIGPIYLLAVTSGSLLQYAIDPNSLLVGASAGVYALIFAHVANVILNWHEMPLRWIRVLVLFVFIFLDFGGAIHRRFYTNDCDSVSHLAHIAGAVTGLFFGYVVLYNVVEHRIEKIIRYVCLFLYSAFFATTIIFVIVRQPYSKNLWNNENCS.

Transmembrane regions (helical) follow at residues 107-129 (WCPP…FFYW), 172-194 (YMFL…LVGI), 201-223 (KIWR…QYAI), 227-249 (SLLV…NVIL), 256-275 (LRWI…FGGA), 290-312 (HLAH…YNVV), and 319-341 (IIRY…FVIV). Serine 233 functions as the Nucleophile in the catalytic mechanism. Histidine 293 is an active-site residue.

This sequence belongs to the peptidase S54 family.

The protein localises to the membrane. The catalysed reaction is Cleaves type-1 transmembrane domains using a catalytic dyad composed of serine and histidine that are contributed by different transmembrane domains.. Functionally, serine protease which activates lin-3 isoform a in the proximal vulva precursor cells (VPC) during vulva development to transmit the inductive anchor cell signal to the distal VPCs. This chain is Rhomboid-related protein 1, found in Caenorhabditis elegans.